The sequence spans 108 residues: Nucleoid-associated protein BPP1222 (108 aa).

A disordered region spans residues 86 to 108; sequence TSQEKMASVTAGMPLPPGMKLPF. Residues 99-108 show a composition bias toward pro residues; the sequence is PLPPGMKLPF.

This sequence belongs to the YbaB/EbfC family. Homodimer.

It is found in the cytoplasm. It localises to the nucleoid. Binds to DNA and alters its conformation. May be involved in regulation of gene expression, nucleoid organization and DNA protection. This is Nucleoid-associated protein BPP1222 from Bordetella parapertussis (strain 12822 / ATCC BAA-587 / NCTC 13253).